The primary structure comprises 216 residues: 4-hydroxy-tetrahydrodipicolinate reductase (216 aa).

Residues glycine 7–methionine 12, glycine 71–threonine 73, and alanine 95–phenylalanine 98 contribute to the NAD(+) site. The active-site Proton donor/acceptor is histidine 127. Histidine 128 is a binding site for (S)-2,3,4,5-tetrahydrodipicolinate. Lysine 131 functions as the Proton donor in the catalytic mechanism. (S)-2,3,4,5-tetrahydrodipicolinate is bound at residue glycine 137–threonine 138.

It belongs to the DapB family.

It localises to the cytoplasm. It catalyses the reaction (S)-2,3,4,5-tetrahydrodipicolinate + NAD(+) + H2O = (2S,4S)-4-hydroxy-2,3,4,5-tetrahydrodipicolinate + NADH + H(+). The enzyme catalyses (S)-2,3,4,5-tetrahydrodipicolinate + NADP(+) + H2O = (2S,4S)-4-hydroxy-2,3,4,5-tetrahydrodipicolinate + NADPH + H(+). Its pathway is amino-acid biosynthesis; L-lysine biosynthesis via DAP pathway; (S)-tetrahydrodipicolinate from L-aspartate: step 4/4. Functionally, catalyzes the conversion of 4-hydroxy-tetrahydrodipicolinate (HTPA) to tetrahydrodipicolinate. The chain is 4-hydroxy-tetrahydrodipicolinate reductase from Thermotoga sp. (strain RQ2).